The sequence spans 272 residues: HTH-type transcriptional repressor AllR (272 aa).

Residues 1 to 20 (MTEVRRRGRPGQQEPSAQKG) are disordered. Positions 21 to 83 (AQALERGIAI…SQLGWWHIGL (63 aa)) constitute an HTH iclR-type domain. Positions 43-62 (VSDISLNLDLPLSTTFRLLK) form a DNA-binding region, H-T-H motif. The IclR-ED domain maps to 98–267 (VLSVGGPFMR…ARNISTALGL (170 aa)). Glyoxylate contacts are provided by residues 154–156 (SGA), D207, C217, and 234–236 (SIS).

Negative regulator of allantoin and glyoxylate utilization operons. Binds to the gcl promoter and to the allS-allA intergenic region. The protein is HTH-type transcriptional repressor AllR (allR) of Klebsiella pneumoniae.